Here is a 200-residue protein sequence, read N- to C-terminus: Recombination protein RecR (200 aa).

A C4-type zinc finger spans residues 60-75; that stretch reads CVYCQALTEDDVCNIC. A Toprim domain is found at 83-177; sequence TKLCIIESML…KISRIGFGVP (95 aa).

It belongs to the RecR family.

May play a role in DNA repair. It seems to be involved in an RecBC-independent recombinational process of DNA repair. It may act with RecF and RecO. In Francisella tularensis subsp. tularensis (strain SCHU S4 / Schu 4), this protein is Recombination protein RecR.